The sequence spans 191 residues: uncharacterized protein (191 aa).

To E.coli YecM.

This is an uncharacterized protein from Haemophilus influenzae (strain ATCC 51907 / DSM 11121 / KW20 / Rd).